The chain runs to 198 residues: MPKIGMEPLRRRELIDAAIRTIGQRGSLDVTVAQIAHEAGVSPALAHHYFGGKDKLILATMRHLLRELGRDLNAAIKQANTPHERIAAIIAVNFSATQFAQETIAAWLTFYVHAQQSDDIKRLLRIYARRLHSNLVFALEQLTSRARANRIAEGAGAMIDGLYIRHALGADAPDAASAIALVEDYIAIQLSGQPSAEN.

One can recognise an HTH tetR-type domain in the interval Pro8–Leu68. The segment at residues Thr31 to Phe50 is a DNA-binding region (H-T-H motif).

The protein operates within amine and polyamine biosynthesis; betaine biosynthesis via choline pathway [regulation]. Repressor involved in the biosynthesis of the osmoprotectant glycine betaine. It represses transcription of the choline transporter BetT and the genes of BetAB involved in the synthesis of glycine betaine. This is HTH-type transcriptional regulator BetI from Brucella melitensis biotype 2 (strain ATCC 23457).